Consider the following 207-residue polypeptide: Outer-membrane lipoprotein LolB (207 aa).

Positions 1–21 (MTLPDFRLIRLLPLASLVLTA) are cleaved as a signal peptide. Cysteine 22 is lipidated: N-palmitoyl cysteine. Cysteine 22 carries the S-diacylglycerol cysteine lipid modification.

It belongs to the LolB family. As to quaternary structure, monomer.

Its subcellular location is the cell outer membrane. Its function is as follows. Plays a critical role in the incorporation of lipoproteins in the outer membrane after they are released by the LolA protein. The protein is Outer-membrane lipoprotein LolB of Salmonella arizonae (strain ATCC BAA-731 / CDC346-86 / RSK2980).